The following is a 601-amino-acid chain: Elongation factor 4 (601 aa).

The tr-type G domain occupies 5–187 (SNIRNFAIIA…AIVTKLPSPN (183 aa)). GTP is bound by residues 17–22 (DHGKST) and 134–137 (NKID).

Belongs to the TRAFAC class translation factor GTPase superfamily. Classic translation factor GTPase family. LepA subfamily.

It localises to the cell inner membrane. It catalyses the reaction GTP + H2O = GDP + phosphate + H(+). Functionally, required for accurate and efficient protein synthesis under certain stress conditions. May act as a fidelity factor of the translation reaction, by catalyzing a one-codon backward translocation of tRNAs on improperly translocated ribosomes. Back-translocation proceeds from a post-translocation (POST) complex to a pre-translocation (PRE) complex, thus giving elongation factor G a second chance to translocate the tRNAs correctly. Binds to ribosomes in a GTP-dependent manner. This Orientia tsutsugamushi (strain Ikeda) (Rickettsia tsutsugamushi) protein is Elongation factor 4.